The sequence spans 459 residues: Endoglucanase EG-1 (459 aa).

An N-terminal signal peptide occupies residues 1-22 (MAPSVTLPLTTAILAIARLVAA). Q23 carries the post-translational modification Pyrrolidone carboxylic acid. The tract at residues 23–397 (QQPGTSTPEV…DIGSTTNSTA (375 aa)) is catalytic. Intrachain disulfides connect C41–C47, C71–C92, C82–C88, C161–C360, C193–C216, C197–C215, C236–C241, and C246–C315. N78 carries N-linked (GlcNAc) asparagine glycosylation. A glycan (N-linked (GlcNAc...) (high mannose) asparagine) is linked at N204. Residue E218 is the Nucleophile of the active site. Catalysis depends on E223, which acts as the Proton donor/acceptor. The segment at 390-425 (GSTTNSTAPPPPPASSTTFSTTRRSSTTSSSPSCTQ) is disordered. Residue N394 is glycosylated (N-linked (GlcNAc...) asparagine). Residues 398–423 (PPPPPASSTTFSTTRRSSTTSSSPSC) form a linker region. Over residues 404–425 (SSTTFSTTRRSSTTSSSPSCTQ) the composition is skewed to low complexity. 3 cysteine pairs are disulfide-bonded: C423-C439, C431-C448, and C442-C458. A CBM1 domain is found at 423-459 (CTQTHWGQCGGIGYSGCKTCTSGTTCQYSNDYYSQCL).

It belongs to the glycosyl hydrolase 7 (cellulase C) family. In terms of processing, asn-204 contains mainly a high-mannose-type glycan (Hex(7-9)GlcNAc(2)), with a small fraction (8%) bearing a single GlcNAc at this site.

Its subcellular location is the secreted. It carries out the reaction Endohydrolysis of (1-&gt;4)-beta-D-glucosidic linkages in cellulose, lichenin and cereal beta-D-glucans.. Endoglucanase (EG) that cleaves the internal beta-1,4-glucosidic bonds in cellulose. The degradation of cellulose involves an interplay between different cellulolytic enzymes. Hydrolysis starts with EGs, which cut internal glycosidic linkages to reduce the polymerization degree of the substrate and creates new chain ends for exocellobiohydrolases (CBHs). The CBH release the disaccharide cellobiose from the non-reducing end of the cellulose polymer chain. Finally, beta-1,4-glucosidases hydrolyze the cellobiose and other short cello-oligosaccharides into glucose units. The polypeptide is Endoglucanase EG-1 (egl1) (Hypocrea jecorina (Trichoderma reesei)).